Reading from the N-terminus, the 228-residue chain is Ribose-5-phosphate isomerase A (228 aa).

Substrate is bound by residues 32 to 35 (TGST), 85 to 88 (DGAD), and 98 to 101 (KGGG). E107 functions as the Proton acceptor in the catalytic mechanism. K125 is a substrate binding site.

The protein belongs to the ribose 5-phosphate isomerase family. As to quaternary structure, homodimer.

The enzyme catalyses aldehydo-D-ribose 5-phosphate = D-ribulose 5-phosphate. It participates in carbohydrate degradation; pentose phosphate pathway; D-ribose 5-phosphate from D-ribulose 5-phosphate (non-oxidative stage): step 1/1. Functionally, catalyzes the reversible conversion of ribose-5-phosphate to ribulose 5-phosphate. This chain is Ribose-5-phosphate isomerase A, found in Cupriavidus necator (strain ATCC 17699 / DSM 428 / KCTC 22496 / NCIMB 10442 / H16 / Stanier 337) (Ralstonia eutropha).